We begin with the raw amino-acid sequence, 488 residues long: Argininosuccinate lyase 2 (488 aa).

Belongs to the lyase 1 family. Argininosuccinate lyase subfamily.

The protein localises to the cytoplasm. It catalyses the reaction 2-(N(omega)-L-arginino)succinate = fumarate + L-arginine. The protein operates within amino-acid biosynthesis; L-arginine biosynthesis; L-arginine from L-ornithine and carbamoyl phosphate: step 3/3. The polypeptide is Argininosuccinate lyase 2 (Rhizobium meliloti (strain 1021) (Ensifer meliloti)).